A 786-amino-acid polypeptide reads, in one-letter code: Protein RDM16 (786 aa).

Composition is skewed to basic and acidic residues over residues 1 to 80 (MDKE…SRDR), 87 to 112 (RSHEGSKEKESRSKRKDREEENGARD), and 123 to 143 (NGERRSRFEDVAIEVENKDAQ). Disordered stretches follow at residues 1–223 (MDKE…SANL), 255–283 (KKATKPTSEGSPHTRVPPSTTTPAVSTGT), 532–557 (RPIEPPAEAAPPPPQPLKLTKKEQKK), and 616–642 (EREQAHTDRNAARKLTPAEKREKKERK). Residues 145 to 164 (SEGSGATNPTSGVTMGASTY) are compositionally biased toward polar residues. The span at 165–176 (SSIPSEASAAPS) shows a compositional bias: low complexity. Positions 177–189 (QTLLTKVSSISTT) are enriched in polar residues. Positions 190-203 (DENKASVVRSHEVP) are enriched in basic and acidic residues. Residues 268–283 (TRVPPSTTTPAVSTGT) are compositionally biased toward low complexity. Over residues 534–547 (IEPPAEAAPPPPQP) the composition is skewed to pro residues.

Its subcellular location is the nucleus. It is found in the nucleoplasm. Functionally, functions in the RNA-directed DNA methylation (RdDM) pathway. Acts as a pre-mRNA splicing factor, likely by affecting Pol V transcripts. Affects DNA methylation of transposable elements (TEs) and preferentially influences NRPD1- and ROS1-targeted loci. The sequence is that of Protein RDM16 from Arabidopsis thaliana (Mouse-ear cress).